Consider the following 319-residue polypeptide: Putative GPI-anchor transamidase (319 aa).

Positions 1-16 (MRHVLLIFCAIIATEA) are cleaved as a signal peptide. Catalysis depends on residues His156 and Cys198. Asn257 carries N-linked (GlcNAc...) asparagine glycosylation.

It belongs to the peptidase C13 family.

Its pathway is glycolipid biosynthesis; glycosylphosphatidylinositol-anchor biosynthesis. Its function is as follows. Mediates GPI anchoring in the endoplasmic reticulum, by replacing a protein's C-terminal GPI attachment signal peptide with a pre-assembled GPI. During this transamidation reaction, the GPI transamidase forms a carbonyl intermediate with the substrate protein. This Caenorhabditis elegans protein is Putative GPI-anchor transamidase.